The following is a 542-amino-acid chain: MLTRTFLGMAISAFLASTGVQAAWSSHGPNVMYYWGQNSAGGSNTQASLGTYCESGQVDAVLLSFLHVFNVGGIPEINLSSACAGTYFPNTQLLSCPAVGADIKKCQDKGVKVILSLGGAAGVYGFTSDAQGQQFAQTIWNLFGGGNSDTRPFGDAVIDGVDLDIEGGSSTGYVAFVNALRQKFSSNFLIGAAPQCPFPDAILGSVLNSASFDYVNVQFYNNYCSATGSSFNFDTWDNWAKTTSPNKNVKIMFTVPGSSTAAGSGYVPMSTLQTIVPSLASKYSSYGGVSVWDASQAWNNGGFNSQLYSLVHSGGSTPPPPSSSSATKTTTKTTATSTKTTTTTAPTATSTPGSCPVANQPCSTQNQYACTADGKYAVCDHGKWVASSCPSNTVCIPTTDGASIYCGYATGSGSTCPSVSALEITAASLGSKNGPVPRPYKASKVAAQLAVTSTDKNSFEAVINARRTTLTPFEKSVTIEFTTPSNIKFTESDMGPVRQVGNKVRIQAKNDYNESMTLVVKVKGSINSGVFVAPSTSAWNFK.

The signal sequence occupies residues 1–22; it reads MLTRTFLGMAISAFLASTGVQA. In terms of domain architecture, GH18 spans 29-314; it reads PNVMYYWGQN…SQLYSLVHSG (286 aa). E166 acts as the Proton donor in catalysis. Residues 312 to 356 are disordered; it reads HSGGSTPPPPSSSSATKTTTKTTATSTKTTTTTAPTATSTPGSCP. Over residues 323 to 354 the composition is skewed to low complexity; the sequence is SSSATKTTTKTTATSTKTTTTTAPTATSTPGS. The tract at residues 355–406 is chitin-binding, high affinity; the sequence is CPVANQPCSTQNQYACTADGKYAVCDHGKWVASSCPSNTVCIPTTDGASIYC. Positions 447 to 542 are excised as a propeptide; sequence AQLAVTSTDK…APSTSAWNFK (96 aa).

The protein belongs to the glycosyl hydrolase 18 family. Chitinase class III subfamily. Monomer. O-glycosylated.

Its subcellular location is the secreted. The enzyme catalyses Random endo-hydrolysis of N-acetyl-beta-D-glucosaminide (1-&gt;4)-beta-linkages in chitin and chitodextrins.. Probably involved in the apical growth and branching of fungal hyphae. The sequence is that of Chitinase 2 (CHI2) from Rhizopus oligosporus (Rhizopus microsporus var. oligosporus).